The following is a 184-amino-acid chain: Threonylcarbamoyl-AMP synthase (184 aa).

The YrdC-like domain maps to 1–184 (MNNLENIVEQ…IFTQHIFRQG (184 aa)).

Belongs to the SUA5 family. TsaC subfamily.

Its subcellular location is the cytoplasm. It carries out the reaction L-threonine + hydrogencarbonate + ATP = L-threonylcarbamoyladenylate + diphosphate + H2O. Its function is as follows. Required for the formation of a threonylcarbamoyl group on adenosine at position 37 (t(6)A37) in tRNAs that read codons beginning with adenine. Catalyzes the conversion of L-threonine, HCO(3)(-)/CO(2) and ATP to give threonylcarbamoyl-AMP (TC-AMP) as the acyladenylate intermediate, with the release of diphosphate. The chain is Threonylcarbamoyl-AMP synthase from Actinobacillus pleuropneumoniae serotype 7 (strain AP76).